Reading from the N-terminus, the 576-residue chain is Sulfite reductase [NADPH] hemoprotein beta-component (576 aa).

A compositionally biased stretch (basic and acidic residues) spans 1–12 (MNVKTEPDRSRD). Residues 1–25 (MNVKTEPDRSRDVSQPLDKLGPDET) are disordered. [4Fe-4S] cluster contacts are provided by Cys-441, Cys-447, Cys-486, and Cys-490. Cys-490 is a binding site for siroheme.

The protein belongs to the nitrite and sulfite reductase 4Fe-4S domain family. As to quaternary structure, alpha(8)-beta(8). The alpha component is a flavoprotein, the beta component is a hemoprotein. Siroheme is required as a cofactor. The cofactor is [4Fe-4S] cluster.

It catalyses the reaction hydrogen sulfide + 3 NADP(+) + 3 H2O = sulfite + 3 NADPH + 4 H(+). Its pathway is sulfur metabolism; hydrogen sulfide biosynthesis; hydrogen sulfide from sulfite (NADPH route): step 1/1. In terms of biological role, component of the sulfite reductase complex that catalyzes the 6-electron reduction of sulfite to sulfide. This is one of several activities required for the biosynthesis of L-cysteine from sulfate. This Nitrobacter hamburgensis (strain DSM 10229 / NCIMB 13809 / X14) protein is Sulfite reductase [NADPH] hemoprotein beta-component.